The sequence spans 493 residues: Probable malate:quinone oxidoreductase (493 aa).

This sequence belongs to the MQO family. FAD serves as cofactor.

The enzyme catalyses (S)-malate + a quinone = a quinol + oxaloacetate. It participates in carbohydrate metabolism; tricarboxylic acid cycle; oxaloacetate from (S)-malate (quinone route): step 1/1. This is Probable malate:quinone oxidoreductase from Lysinibacillus sphaericus (strain C3-41).